A 276-amino-acid chain; its full sequence is Diaminopimelate epimerase (276 aa).

Positions 13, 46, and 66 each coordinate substrate. The active-site Proton donor is the cysteine 75. Substrate contacts are provided by residues 76-77 (GN), asparagine 159, asparagine 192, and 210-211 (ER). Residue cysteine 219 is the Proton acceptor of the active site. 220-221 (GS) serves as a coordination point for substrate.

The protein belongs to the diaminopimelate epimerase family. As to quaternary structure, homodimer.

The protein resides in the cytoplasm. It catalyses the reaction (2S,6S)-2,6-diaminopimelate = meso-2,6-diaminopimelate. It functions in the pathway amino-acid biosynthesis; L-lysine biosynthesis via DAP pathway; DL-2,6-diaminopimelate from LL-2,6-diaminopimelate: step 1/1. Its function is as follows. Catalyzes the stereoinversion of LL-2,6-diaminopimelate (L,L-DAP) to meso-diaminopimelate (meso-DAP), a precursor of L-lysine and an essential component of the bacterial peptidoglycan. In Pseudoalteromonas atlantica (strain T6c / ATCC BAA-1087), this protein is Diaminopimelate epimerase.